The chain runs to 309 residues: Isopentenyl-diphosphate Delta-isomerase II (309 aa).

Lysine 112 serves as a coordination point for substrate. Histidine 116 and histidine 128 together coordinate Mg(2+). The Nudix hydrolase domain occupies 126–278 (LLHRAFSVFL…GLKLSPWFRL (153 aa)). Residues arginine 147 and lysine 151 each coordinate substrate. Residue cysteine 163 is part of the active site. Serine 164 provides a ligand contact to substrate. Positions 223 and 225 each coordinate Mg(2+). Residue glutamate 225 is part of the active site.

It belongs to the IPP isomerase type 1 family. Mg(2+) is required as a cofactor.

The catalysed reaction is isopentenyl diphosphate = dimethylallyl diphosphate. It functions in the pathway isoprenoid biosynthesis; dimethylallyl diphosphate biosynthesis; dimethylallyl diphosphate from isopentenyl diphosphate: step 1/1. The protein operates within porphyrin-containing compound metabolism; chlorophyll biosynthesis. Catalyzes the 1,3-allylic rearrangement of the homoallylic substrate isopentenyl (IPP) to its highly electrophilic allylic isomer, dimethylallyl diphosphate (DMAPP). The sequence is that of Isopentenyl-diphosphate Delta-isomerase II (IPI2) from Camptotheca acuminata (Happy tree).